The chain runs to 45 residues: Endo-1,4-beta-xylanase Xyn10A (45 aa).

It belongs to the glycosyl hydrolase 10 (cellulase F) family.

It localises to the secreted. It is found in the extracellular space. The catalysed reaction is Endohydrolysis of (1-&gt;4)-beta-D-xylosidic linkages in xylans.. It catalyses the reaction Endohydrolysis of (1-&gt;4)-beta-D-glucosidic linkages in cellulose, lichenin and cereal beta-D-glucans.. It participates in glycan degradation; xylan degradation. Has xylanase, avicelase and cellobiohydrolase activity. This chain is Endo-1,4-beta-xylanase Xyn10A, found in Gloeophyllum trabeum (Brown rot fungus).